A 438-amino-acid polypeptide reads, in one-letter code: sn-glycerol-3-phosphate-binding periplasmic protein UgpB (438 aa).

A signal peptide spans 1–23 (MKPLRYTASALALGLALMANAQA). 7 residues coordinate sn-glycerol 3-phosphate: Tyr-65, Glu-89, Ser-144, Ser-270, Gly-307, Tyr-346, and Arg-397.

The protein belongs to the bacterial solute-binding protein 1 family. As to quaternary structure, the complex is composed of two ATP-binding proteins (UgpC), two transmembrane proteins (UgpA and UgpE) and a solute-binding protein (UgpB).

Its subcellular location is the periplasm. Its function is as follows. Part of the ABC transporter complex UgpBAEC involved in sn-glycerol-3-phosphate (G3P) import. Binds G3P. This chain is sn-glycerol-3-phosphate-binding periplasmic protein UgpB (ugpB), found in Escherichia coli O6:K15:H31 (strain 536 / UPEC).